Reading from the N-terminus, the 153-residue chain is Endoribonuclease YbeY (153 aa).

3 residues coordinate Zn(2+): His-118, His-122, and His-128.

It belongs to the endoribonuclease YbeY family. Requires Zn(2+) as cofactor.

It is found in the cytoplasm. Its function is as follows. Single strand-specific metallo-endoribonuclease involved in late-stage 70S ribosome quality control and in maturation of the 3' terminus of the 16S rRNA. This chain is Endoribonuclease YbeY, found in Oenococcus oeni (strain ATCC BAA-331 / PSU-1).